Consider the following 625-residue polypeptide: Baeyer-Villiger monooxygenase ATR8 (625 aa).

FAD is bound by residues Asp112, 120-123, Asp132, and Tyr138; that span reads TWYW. An NADP(+)-binding site is contributed by 130-132; that stretch reads QCD. Residues 266-272, 289-290, and 405-406 each bind NADP(+); these read TGATAIQ, RT, and KR.

The protein belongs to the FAD-binding monooxygenase family. It depends on FAD as a cofactor.

Its pathway is mycotoxin biosynthesis. Functionally, baeyer-Villiger monooxygenase; part of the core atranone cluster (CAC) which products are predicted to catalyze most or all steps of mycotoxin atranone synthesis, starting from geranylgeranyl pyrophosphate (GGPP). The initial cyclization of GGPP to dolabellane is probably performed by the terpene cyclase ATR13. The Baeyer-Villiger oxidation near the end of the atranone synthesis, which converts atranones D and E to atranones F and G is predicted to be catalyzed by the monooxygenase ATR8. Of the CAC's other predicted gene products, the reducing PKS ATR6 might synthesize a polyketide chain. This polyketide is probably transferred onto the atranone backbone by the polyketide transferase ATR5. Other predicted CAC products include 4 oxygenases (ATR2, ATR3, ATR4, and ATR14), 3 short-chain reductases (ATR7, ATR9, and ATR10), and a methyltransferase (ATR12). These may all be involved in the various steps of atranone biosynthesis, although their specific roles must await experimental determination. The polypeptide is Baeyer-Villiger monooxygenase ATR8 (Stachybotrys chlorohalonatus (strain IBT 40285)).